The sequence spans 81 residues: Beta-catenin-interacting protein 1 (81 aa).

Serine 59 is modified (phosphoserine).

The protein belongs to the CTNNBIP1 family. Binds CTNNB1. Highly expressed in heart, brain, liver and skeletal muscle. Detected at low levels in kidney, testis and lung.

Its subcellular location is the cytoplasm. It localises to the nucleus. Its function is as follows. Prevents the interaction between CTNNB1 and TCF family members, and acts as a negative regulator of the Wnt signaling pathway. This chain is Beta-catenin-interacting protein 1 (Ctnnbip1), found in Mus musculus (Mouse).